The sequence spans 527 residues: Probable protein kinase UbiB (527 aa).

A Protein kinase domain is found at 123 to 527 (EFNETALASA…AIWLLIYLLS (405 aa)). Residues 129–137 (LASASIAQV) and lysine 161 each bind ATP. Aspartate 296 serves as the catalytic Proton acceptor. Residues 506 to 526 (FTSFILGLCTGLAIWLLIYLL) form a helical membrane-spanning segment.

This sequence belongs to the ABC1 family. UbiB subfamily.

It is found in the cell inner membrane. Its pathway is cofactor biosynthesis; ubiquinone biosynthesis [regulation]. Its function is as follows. Is probably a protein kinase regulator of UbiI activity which is involved in aerobic coenzyme Q (ubiquinone) biosynthesis. The protein is Probable protein kinase UbiB of Pasteurella multocida (strain Pm70).